The following is a 591-amino-acid chain: Trihelix transcription factor PTL (591 aa).

Residues 1 to 32 form a disordered region; that stretch reads MDQDQHPQYGIPELRQLMKGGGRTTTTTPSTS. In terms of domain architecture, Myb-like 1 spans 118-177; sequence GRWPRQETLTLLEIRSRLDHKFKEANQKGPLWDEVSRIMSEEHGYQRSGKKCREKFENLY. Residues 380 to 410 form a disordered region; it reads CSSPEERTNGNNEIRNNSETQNENGSDQTMT. A compositionally biased stretch (polar residues) spans 388–410; that stretch reads NGNNEIRNNSETQNENGSDQTMT. Residues 422-479 form the Myb-like 2 domain; sequence WGEQEILKLMEIRTSMDSTFQEILGGCSDEFLWEEIAAKLIQLGFDQRSALLCKEKWE. A disordered region spans residues 491–551; that stretch reads QINKKRKDNS…SNANANANVT (61 aa). A compositionally biased stretch (polar residues) spans 515 to 534; the sequence is IYNNRESGYNDNDPHQINEQ. Low complexity predominate over residues 535–551; the sequence is GNVGSSTSNANANANVT.

As to quaternary structure, interacts with KIN10. As to expression, confined to flowers, at low levels. Also present in 7-days-old seedlings. Barely detectable in other tissues such as young seedlings, roots, stems, leaves and siliques. Expressed in flower primordia, more precisely between newly arisen sepal primordia and also at the basal margins of developing sepals.

It localises to the nucleus. Functionally, transcription factor that prevents growth. Regulates perianth architecture in flower, mostly in the second whorl, probably by suppressing growth between initiating sepals, ensuring that they remain separate, and by modulating organ shapes. Required for the establishment of auxin flux. This chain is Trihelix transcription factor PTL (PTL), found in Arabidopsis thaliana (Mouse-ear cress).